A 168-amino-acid chain; its full sequence is Desumoylating isopeptidase 1 (168 aa).

The 143-residue stretch at 7 to 149 folds into the PPPDE domain; sequence YPVKLYVYDL…FGQALRPLLD (143 aa). Residue His38 is part of the active site. The short motif at 83 to 91 is the Nuclear export signal 1 element; sequence IFLEYLSSL. Cys108 is an active-site residue. Positions 139-153 match the Nuclear export signal 2 motif; sequence PFGQALRPLLDSIQI.

This sequence belongs to the DeSI family. In terms of assembly, homodimer. Interacts with UBQLN4; leading to the export of UBQLN4 from the nucleus.

The protein localises to the cytoplasm. The protein resides in the nucleus. It carries out the reaction S-hexadecanoyl-L-cysteinyl-[protein] + H2O = L-cysteinyl-[protein] + hexadecanoate + H(+). Its activity is regulated as follows. Palmostatin B inhibits its palmitoyl protein thioesterase activity. Its function is as follows. Protease which deconjugates SUMO1, SUMO2 and SUMO3 from some substrate proteins. Has isopeptidase but not SUMO-processing activity. Desumoylates ZBTB46. Collaborates with UBQLN4 in the export of ubiquitinated proteins from the nucleus to the cytoplasm. Exhibits palmitoyl protein thioesterase (S-depalmitoylation) activity towards synthetic substrates 4-methylumbelliferyl-6-S-palmitoyl-beta-D-glucopyranoside and S-depalmitoylation probe 5 (DPP-5). The protein is Desumoylating isopeptidase 1 of Homo sapiens (Human).